Here is a 202-residue protein sequence, read N- to C-terminus: Ribosomal RNA small subunit methyltransferase G (202 aa).

Residues glycine 75, phenylalanine 80, 125–126, and arginine 139 contribute to the S-adenosyl-L-methionine site; that span reads VQ.

The protein belongs to the methyltransferase superfamily. RNA methyltransferase RsmG family.

The protein resides in the cytoplasm. In terms of biological role, specifically methylates the N7 position of a guanine in 16S rRNA. In Mesomycoplasma hyopneumoniae (strain 7448) (Mycoplasma hyopneumoniae), this protein is Ribosomal RNA small subunit methyltransferase G.